Reading from the N-terminus, the 277-residue chain is Sulfur carrier protein FdhD (277 aa).

C121 serves as the catalytic Cysteine persulfide intermediate. 260–265 is a Mo-bis(molybdopterin guanine dinucleotide) binding site; sequence FCKPGR.

The protein belongs to the FdhD family.

The protein resides in the cytoplasm. Required for formate dehydrogenase (FDH) activity. Acts as a sulfur carrier protein that transfers sulfur from IscS to the molybdenum cofactor prior to its insertion into FDH. This Escherichia coli O81 (strain ED1a) protein is Sulfur carrier protein FdhD.